The primary structure comprises 264 residues: Thymidylate synthase (264 aa).

Arginine 21 contacts dUMP. Position 51 (histidine 51) interacts with (6R)-5,10-methylene-5,6,7,8-tetrahydrofolate. 126–127 (RR) is a dUMP binding site. Cysteine 146 functions as the Nucleophile in the catalytic mechanism. DUMP-binding positions include 166–169 (RSAD), asparagine 177, and 207–209 (HIY). Aspartate 169 provides a ligand contact to (6R)-5,10-methylene-5,6,7,8-tetrahydrofolate. Residue alanine 263 coordinates (6R)-5,10-methylene-5,6,7,8-tetrahydrofolate.

The protein belongs to the thymidylate synthase family. Bacterial-type ThyA subfamily. As to quaternary structure, homodimer.

Its subcellular location is the cytoplasm. The catalysed reaction is dUMP + (6R)-5,10-methylene-5,6,7,8-tetrahydrofolate = 7,8-dihydrofolate + dTMP. The protein operates within pyrimidine metabolism; dTTP biosynthesis. Catalyzes the reductive methylation of 2'-deoxyuridine-5'-monophosphate (dUMP) to 2'-deoxythymidine-5'-monophosphate (dTMP) while utilizing 5,10-methylenetetrahydrofolate (mTHF) as the methyl donor and reductant in the reaction, yielding dihydrofolate (DHF) as a by-product. This enzymatic reaction provides an intracellular de novo source of dTMP, an essential precursor for DNA biosynthesis. The sequence is that of Thymidylate synthase from Vesicomyosocius okutanii subsp. Calyptogena okutanii (strain HA).